We begin with the raw amino-acid sequence, 109 residues long: Phosphoribosyl-ATP pyrophosphatase (109 aa).

This sequence belongs to the PRA-PH family.

The protein localises to the cytoplasm. It carries out the reaction 1-(5-phospho-beta-D-ribosyl)-ATP + H2O = 1-(5-phospho-beta-D-ribosyl)-5'-AMP + diphosphate + H(+). Its pathway is amino-acid biosynthesis; L-histidine biosynthesis; L-histidine from 5-phospho-alpha-D-ribose 1-diphosphate: step 2/9. The sequence is that of Phosphoribosyl-ATP pyrophosphatase from Marinobacter nauticus (strain ATCC 700491 / DSM 11845 / VT8) (Marinobacter aquaeolei).